Reading from the N-terminus, the 80-residue chain is Serine palmitoyltransferase small subunit B (80 aa).

Topologically, residues 1–11 (MDVKHIKDYLS) are cytoplasmic. Residues 12–29 (WLYYQYLLITCSYVLEPW) form a helical membrane-spanning segment. Residues 30–36 (EQSIFNT) are Lumenal-facing. Residues 37–57 (LLLTIIAMVIYSSYIFIPIHV) traverse the membrane as a helical segment. Residues 58 to 80 (RLAVEFFSGIFGGQHESTVALMS) lie on the Cytoplasmic side of the membrane.

The protein belongs to the SPTSS family. SPTSSB subfamily. As to quaternary structure, component of the serine palmitoyltransferase (SPT) complex, which is composed of SPTLC1, SPTLC2 or SPTLC3 and SPTSSA or SPTSSB. The heterodimer consisting of SPTLC1 and SPTLC2/SPTLC3 forms the catalytic core of the enzyme, while SPTSSA or SPTSSB subunits determine substrate specificity. SPT also interacts with ORMDL proteins, especially ORMDL3, which negatively regulate SPT activity in the presence of ceramides.

It is found in the endoplasmic reticulum membrane. It functions in the pathway lipid metabolism; sphingolipid metabolism. In terms of biological role, component of the serine palmitoyltransferase multisubunit enzyme (SPT) that catalyzes the initial and rate-limiting step in sphingolipid biosynthesis by condensing L-serine and activated acyl-CoA (most commonly palmitoyl-CoA) to form long-chain bases. The SPT complex is composed of SPTLC1, SPTLC2 or SPTLC3 and SPTSSA or SPTSSB. Within this complex, the heterodimer consisting of SPTLC1 and SPTLC2/SPTLC3 forms the catalytic core. Within the SPT complex, SPTSSB stimulates the catalytic activity and plays a role in substrate specificity. SPT complexes with this subunit showing a preference for longer acyl-CoAs. The SPTLC1-SPTLC2-SPTSSB complex shows a strong preference for C18-CoA substrate, while the SPTLC1-SPTLC3-SPTSSB isozyme displays an ability to use a broader range of acyl-CoAs, without apparent preference. The chain is Serine palmitoyltransferase small subunit B (sptssb) from Xenopus tropicalis (Western clawed frog).